The sequence spans 650 residues: MIHDLLLACRSHNPEQLGIKAFNETTVIDQFIHPCEREIFMDIIKIIKVYQEVEQFTHSSGRKSDTHGELPDSLHGYYLLNLAKGIEMALEEYYAEIGRLEKYCLGNERNSLSYVYNALYAKFPLLVFMRNLITEIHVLNLRGCVLLHNLHQQCEHGDIQLEKAIKIIMKPVKNAFFSSLAHWLLFGVIDDVHSEFFIKFTPTDAVDGSSFSKSATCSLLSAEKNPEDYIWQYEVNMSQLPGFFSIVLAEKVLFVGQTVLVFKMGRNVKVKNKTDPLAAKLAELDSDDIYQLWSGRESEFFKMVVDLSNEDTINVFRLEKVIIDIKNYVSARLSEIAVNEVDLERQMGLIKDFFLLGRGEFYLEFCSQMVGTMETYREERFKNVTRSFELAATVTGITDDLDKFSLICQRSTSEPDDTSDFNFLQGLSLKYEYEWPLNLLFSPTTIERYNNIFRFLLIIRTYQYEIQRVWAKQTWRAKSAKDVPPNNKIITLRNYLMFFLNNMQYYIQVDVLESQFGILMNVIKSRSDFEVIQRAHTVFLANVLSHCFLLNESETQLNVTGSQNRNPIYGTLLKLFGICEKFAHMTQTKDPSDDLEDEVDQLNESFGVQIASLIQLLVDVKSASCLGPLSQLLLRLDFNCWFSASHNTSA.

Position 214 is a phosphoserine (serine 214). The residue at position 216 (threonine 216) is a Phosphothreonine. Serine 218 carries the post-translational modification Phosphoserine.

Belongs to the TUBGCP family.

The protein resides in the cytoplasm. It is found in the cytoskeleton. Its subcellular location is the microtubule organizing center. It localises to the centrosome. In terms of biological role, gamma-tubulin complex is necessary for microtubule nucleation at the centrosome. This chain is Gamma-tubulin complex component 4 homolog (Grip75), found in Drosophila melanogaster (Fruit fly).